A 1033-amino-acid polypeptide reads, in one-letter code: RNA cytidine acetyltransferase (1033 aa).

Residues 285–294 (GRGKSAALGL) and Arg465 each bind ATP. The region spanning 560-694 (VDLKNPKLPD…IHVRDAKTMP (135 aa)) is the N-acetyltransferase domain. Residues 626 to 628 (IAV), 633 to 639 (VKMGYGT), and Arg727 contribute to the acetyl-CoA site. The tract at residues 988 to 1033 (ENQIQKTNGKGARVVSIKGEKRKNNSLDASDKKTKEKPSSKKKFRK) is disordered. Basic and acidic residues predominate over residues 1005–1026 (KGEKRKNNSLDASDKKTKEKPS).

Belongs to the RNA cytidine acetyltransferase family. NAT10 subfamily. In terms of assembly, interacts with tan1.

Its subcellular location is the nucleus. It localises to the nucleolus. It carries out the reaction a cytidine in 18S rRNA + acetyl-CoA + ATP + H2O = an N(4)-acetylcytidine in 18S rRNA + ADP + phosphate + CoA + H(+). The enzyme catalyses a cytidine in tRNA + acetyl-CoA + ATP + H2O = an N(4)-acetylcytidine in tRNA + ADP + phosphate + CoA + H(+). RNA cytidine acetyltransferase with specificity toward both 18S rRNA and tRNAs. Catalyzes the formation of N(4)-acetylcytidine (ac4C) at positions 1297 and 1815 in 18S rRNA. Required for early nucleolar cleavages of precursor rRNA at sites A0, A1 and A2 during 18S rRNA synthesis. Catalyzes the formation of ac4C in serine and leucine tRNAs. Requires the tRNA-binding adapter protein tan1 for full tRNA acetyltransferase activity but not for 18S rRNA acetylation. This is RNA cytidine acetyltransferase from Schizosaccharomyces pombe (strain 972 / ATCC 24843) (Fission yeast).